The chain runs to 481 residues: MITIEQLLDILKKDHNFREVLDSDGYHYHYQGLSFERLSYDSRQVDGKTLFFAKGATFKADYLKEAITNGLQLYISEVDYELGIPVVLVTDIKKAMSLIAMAFYGNPQEKLKLLAFTGTKGKTTAAYFAYHMLKESYKPAMFSTMNTTLDGKTFFKSQLTTPESLDLFAMMAECVTNGMTHLIMEVSSQAYLVDRVYGLTFDVGVFLNISPDHIGPIEHPTFEDYFYHKRLLMENSRAVVINSGMDHFSFLADQVADQEHVFYGPLSDNQITTSQAFSFEAKGQLAGHYDIQLIGHFNQENAMAAGLACLRLGASLADIQKGIAKTRVPGRMEVLTMTNHAKVFVDYAHNGDSLEKLLSVVEEHQTGKLMLILGAPGNKGESRRADFGRVIHQHPNLTVILTADDPNFEDPEDISQEIASHIARPVEIISDREQAIQKAMSLCQEAKDAVIIAGKGADAYQIVKGQQVAYAGDLAIATHYL.

Residue Ser-42 coordinates UDP-N-acetyl-alpha-D-muramoyl-L-alanyl-D-glutamate. 118–124 (GTKGKTT) is an ATP binding site. UDP-N-acetyl-alpha-D-muramoyl-L-alanyl-D-glutamate is bound by residues Gln-158, 160–161 (TT), Ser-187, and Arg-195. Lys-229 carries the N6-carboxylysine modification. Positions 404–407 (DDPN) match the L-lysine recognition motif motif.

This sequence belongs to the MurCDEF family. MurE subfamily. Post-translationally, carboxylation is probably crucial for Mg(2+) binding and, consequently, for the gamma-phosphate positioning of ATP.

Its subcellular location is the cytoplasm. It carries out the reaction UDP-N-acetyl-alpha-D-muramoyl-L-alanyl-D-glutamate + L-lysine + ATP = UDP-N-acetyl-alpha-D-muramoyl-L-alanyl-gamma-D-glutamyl-L-lysine + ADP + phosphate + H(+). The protein operates within cell wall biogenesis; peptidoglycan biosynthesis. Functionally, catalyzes the addition of L-lysine to the nucleotide precursor UDP-N-acetylmuramoyl-L-alanyl-D-glutamate (UMAG) in the biosynthesis of bacterial cell-wall peptidoglycan. The sequence is that of UDP-N-acetylmuramoyl-L-alanyl-D-glutamate--L-lysine ligase from Streptococcus pyogenes serotype M4 (strain MGAS10750).